A 128-amino-acid chain; its full sequence is MSYYQGNDSRKITGGQKGKNRDKRKYELGSPPTETKISDKDIKEKDRVAGGNFKLRLRYASYANVYDPQSKTAKKVKIISVLESPANREYARRGIIVKGTLIQTELGKAKVTSRPGQDGIINALLLRE.

Residues Met1–Asp41 are disordered.

The protein belongs to the eukaryotic ribosomal protein eS8 family. As to quaternary structure, part of the 30S ribosomal subunit.

This Sulfolobus acidocaldarius (strain ATCC 33909 / DSM 639 / JCM 8929 / NBRC 15157 / NCIMB 11770) protein is Small ribosomal subunit protein eS8.